Consider the following 77-residue polypeptide: UPF0346 protein lin1971 (77 aa).

It belongs to the UPF0346 family.

This Listeria innocua serovar 6a (strain ATCC BAA-680 / CLIP 11262) protein is UPF0346 protein lin1971.